Reading from the N-terminus, the 152-residue chain is Toxin Res (152 aa).

The protein belongs to the MbcT/ParT/Res family. In terms of assembly, homodimer. Forms a complex with cognate antitoxin Xre.

Functionally, toxic component of a type II toxin-antitoxin (TA) system. Expression in E.coli inhibits cell growth; bacteriostasis is neutralized by expression of cognate antitoxin Xre. Probably depletes intracellular NAD(+). This is Toxin Res from Yersinia enterocolitica serotype O:8 / biotype 1B (strain NCTC 13174 / 8081).